The following is a 204-amino-acid chain: Translation initiation factor 2 subunit beta (204 aa).

The TRAM domain maps to 146-204; sequence AIEEGKELEVHIESISKKGDGVARIGKYILYVAGTKAGQNVKVRITRISGQVAFTQKIL.

The protein belongs to the eIF-2-beta/eIF-5 family. As to quaternary structure, heterotrimer composed of an alpha, a beta and a gamma chain.

Its function is as follows. eIF-2 functions in the early steps of protein synthesis by forming a ternary complex with GTP and initiator tRNA. The protein is Translation initiation factor 2 subunit beta of Methanocorpusculum labreanum (strain ATCC 43576 / DSM 4855 / Z).